Here is a 478-residue protein sequence, read N- to C-terminus: Glycogen synthase (478 aa).

Residue Lys-15 participates in ADP-alpha-D-glucose binding.

Belongs to the glycosyltransferase 1 family. Bacterial/plant glycogen synthase subfamily.

It catalyses the reaction [(1-&gt;4)-alpha-D-glucosyl](n) + ADP-alpha-D-glucose = [(1-&gt;4)-alpha-D-glucosyl](n+1) + ADP + H(+). The protein operates within glycan biosynthesis; glycogen biosynthesis. Functionally, synthesizes alpha-1,4-glucan chains using ADP-glucose. This is Glycogen synthase from Clostridium botulinum (strain Alaska E43 / Type E3).